Consider the following 381-residue polypeptide: MPFGNTHNKFKLNYKPEEEYPDLTKHNNHMAKALTPEIYKKLRDKETPSGFTLDDVIQTGVDNPGHPFIMTVGCVAGDEESYQVFKDLFDPIIQDRHGGYKPTDKHKTDLNHENLKGGDDLDPNYVLSSRVRTGRSIKGYTLPPHCSRGERRAVEKLSIEALNSLTGEFKGKYYPLKSMTEQEQQQLIDDHFLFDKPVSPLLLASGMARDWPDARGIWHNDNKTFLVWVNEEDHLRVISMQKGGNMKEVFRRFCVGLQKIEEIFKKAGHPFMWNEHLGYVLTCPSNLGTGLRGGVHVKLAHLSKHPKFEEILTRLRLQKRGTGGVDTAAVGSVFDISNADRLGSSEVEQVQLVVDGVKLMVEMEKKLEKGQSIDDMIPAQK.

Residues 11–98 (KLNYKPEEEY…FDPIIQDRHG (88 aa)) enclose the Phosphagen kinase N-terminal domain. The Phosphagen kinase C-terminal domain maps to 125 to 367 (YVLSSRVRTG…KLMVEMEKKL (243 aa)). 128 to 132 (SSRVR) serves as a coordination point for ATP. Ser164 carries the phosphoserine modification. Thr166 is modified (phosphothreonine). Phosphoserine is present on Ser178. A Phosphothreonine modification is found at Thr180. His191 serves as a coordination point for ATP. A Phosphoserine modification is found at Ser199. Residues Arg236 and Arg292 each contribute to the ATP site. Phosphothreonine is present on residues Thr313 and Thr322. ATP is bound by residues 320–325 (RGTGGV) and Asp335. A Phosphoserine modification is found at Ser372.

Belongs to the ATP:guanido phosphotransferase family. Dimer of identical or non-identical chains, which can be either B (brain type) or M (muscle type). With MM being the major form in skeletal muscle and myocardium, MB existing in myocardium, and BB existing in many tissues, especially brain.

It localises to the cytoplasm. It carries out the reaction creatine + ATP = N-phosphocreatine + ADP + H(+). Functionally, reversibly catalyzes the transfer of phosphate between ATP and various phosphogens (e.g. creatine phosphate). Creatine kinase isoenzymes play a central role in energy transduction in tissues with large, fluctuating energy demands, such as skeletal muscle, heart, brain and spermatozoa. This is Creatine kinase M-type (CKM) from Canis lupus familiaris (Dog).